We begin with the raw amino-acid sequence, 309 residues long: Sulfate adenylyltransferase subunit 2 (309 aa).

This sequence belongs to the PAPS reductase family. CysD subfamily. As to quaternary structure, heterodimer composed of CysD, the smaller subunit, and CysN.

It carries out the reaction sulfate + ATP + H(+) = adenosine 5'-phosphosulfate + diphosphate. Its pathway is sulfur metabolism; hydrogen sulfide biosynthesis; sulfite from sulfate: step 1/3. In terms of biological role, with CysN forms the ATP sulfurylase (ATPS) that catalyzes the adenylation of sulfate producing adenosine 5'-phosphosulfate (APS) and diphosphate, the first enzymatic step in sulfur assimilation pathway. APS synthesis involves the formation of a high-energy phosphoric-sulfuric acid anhydride bond driven by GTP hydrolysis by CysN coupled to ATP hydrolysis by CysD. The sequence is that of Sulfate adenylyltransferase subunit 2 from Mycobacterium bovis (strain ATCC BAA-935 / AF2122/97).